The primary structure comprises 293 residues: Acetyl-coenzyme A carboxylase carboxyl transferase subunit beta (293 aa).

The CoA carboxyltransferase N-terminal domain maps to 29 to 293; it reads LWRKCPRCEG…MGWPPLALDD (265 aa). The Zn(2+) site is built by cysteine 33, cysteine 36, cysteine 52, and cysteine 55. The C4-type zinc-finger motif lies at 33-55; the sequence is CPRCEGVVYRPELDRNMDVCPKC.

Belongs to the AccD/PCCB family. Acetyl-CoA carboxylase is a heterohexamer composed of biotin carboxyl carrier protein (AccB), biotin carboxylase (AccC) and two subunits each of ACCase subunit alpha (AccA) and ACCase subunit beta (AccD). Zn(2+) serves as cofactor.

The protein resides in the cytoplasm. The enzyme catalyses N(6)-carboxybiotinyl-L-lysyl-[protein] + acetyl-CoA = N(6)-biotinyl-L-lysyl-[protein] + malonyl-CoA. Its pathway is lipid metabolism; malonyl-CoA biosynthesis; malonyl-CoA from acetyl-CoA: step 1/1. Component of the acetyl coenzyme A carboxylase (ACC) complex. Biotin carboxylase (BC) catalyzes the carboxylation of biotin on its carrier protein (BCCP) and then the CO(2) group is transferred by the transcarboxylase to acetyl-CoA to form malonyl-CoA. This chain is Acetyl-coenzyme A carboxylase carboxyl transferase subunit beta, found in Alcanivorax borkumensis (strain ATCC 700651 / DSM 11573 / NCIMB 13689 / SK2).